The chain runs to 115 residues: Large ribosomal subunit protein uL22 (115 aa).

This sequence belongs to the universal ribosomal protein uL22 family. In terms of assembly, part of the 50S ribosomal subunit.

In terms of biological role, this protein binds specifically to 23S rRNA; its binding is stimulated by other ribosomal proteins, e.g. L4, L17, and L20. It is important during the early stages of 50S assembly. It makes multiple contacts with different domains of the 23S rRNA in the assembled 50S subunit and ribosome. Functionally, the globular domain of the protein is located near the polypeptide exit tunnel on the outside of the subunit, while an extended beta-hairpin is found that lines the wall of the exit tunnel in the center of the 70S ribosome. The sequence is that of Large ribosomal subunit protein uL22 (rplV) from Wolbachia pipientis wMel.